A 295-amino-acid polypeptide reads, in one-letter code: Protease HtpX (295 aa).

2 helical membrane-spanning segments follow: residues 4–24 (ILLF…TLSL) and 42–62 (QLLV…LFIS). His147 contributes to the Zn(2+) binding site. Residue Glu148 is part of the active site. His151 lines the Zn(2+) pocket. 2 consecutive transmembrane segments (helical) span residues 158 to 178 (VTLA…ARII) and 199 to 219 (ITTI…VMWF). Glu224 contributes to the Zn(2+) binding site.

Belongs to the peptidase M48B family. Zn(2+) serves as cofactor.

The protein resides in the cell inner membrane. The polypeptide is Protease HtpX (Pseudomonas savastanoi pv. phaseolicola (strain 1448A / Race 6) (Pseudomonas syringae pv. phaseolicola (strain 1448A / Race 6))).